Consider the following 142-residue polypeptide: Large ribosomal subunit protein uL13 (142 aa).

It belongs to the universal ribosomal protein uL13 family. As to quaternary structure, part of the 50S ribosomal subunit.

This protein is one of the early assembly proteins of the 50S ribosomal subunit, although it is not seen to bind rRNA by itself. It is important during the early stages of 50S assembly. In Ectopseudomonas mendocina (strain ymp) (Pseudomonas mendocina), this protein is Large ribosomal subunit protein uL13.